Here is a 252-residue protein sequence, read N- to C-terminus: Carbohydrate deacetylase (252 aa).

Positions 59 and 122 each coordinate Mg(2+).

This sequence belongs to the YdjC deacetylase family. As to quaternary structure, homodimer. It depends on Mg(2+) as a cofactor.

Its function is as follows. Probably catalyzes the deacetylation of acetylated carbohydrates an important step in the degradation of oligosaccharides. The polypeptide is Carbohydrate deacetylase (Vibrio vulnificus (strain CMCP6)).